A 385-amino-acid chain; its full sequence is S-adenosylmethionine synthase (385 aa).

Residue His15 participates in ATP binding. Mg(2+) is bound at residue Asp17. Glu43 serves as a coordination point for K(+). L-methionine is bound by residues Glu56 and Gln99. Residues Gln99–Asn109 form a flexible loop region. ATP-binding positions include Asp164 to Lys166, Arg230 to Phe231, Asp239, Arg245 to Lys246, Ala262, and Lys266. Position 239 (Asp239) interacts with L-methionine. Lys270 is an L-methionine binding site.

It belongs to the AdoMet synthase family. As to quaternary structure, homotetramer; dimer of dimers. Mg(2+) is required as a cofactor. Requires K(+) as cofactor.

It is found in the cytoplasm. The enzyme catalyses L-methionine + ATP + H2O = S-adenosyl-L-methionine + phosphate + diphosphate. Its pathway is amino-acid biosynthesis; S-adenosyl-L-methionine biosynthesis; S-adenosyl-L-methionine from L-methionine: step 1/1. Its function is as follows. Catalyzes the formation of S-adenosylmethionine (AdoMet) from methionine and ATP. The overall synthetic reaction is composed of two sequential steps, AdoMet formation and the subsequent tripolyphosphate hydrolysis which occurs prior to release of AdoMet from the enzyme. The chain is S-adenosylmethionine synthase from Baumannia cicadellinicola subsp. Homalodisca coagulata.